Consider the following 563-residue polypeptide: ATP-dependent RNA helicase DeaD (563 aa).

The short motif at 13 to 41 (ATFADLQIHPRVLRAIGDVGYESPTAIQA) is the Q motif element. Positions 44–215 (IPALMAGSDV…AKYLHDPFEV (172 aa)) constitute a Helicase ATP-binding domain. 57 to 64 (AQTGTGKT) serves as a coordination point for ATP. A DEAD box motif is present at residues 163–166 (DEAD). Residues 226–385 (NISQSYIQVA…AQLPTVEDVN (160 aa)) enclose the Helicase C-terminal domain. Disordered stretches follow at residues 441-470 (LMAP…PDLT) and 543-563 (YRPP…KHVG). Residues 451-461 (RNRDQRRDRPQ) show a composition bias toward basic and acidic residues. Residues 551-563 (RHNGGKPRRKHVG) are compositionally biased toward basic residues.

It belongs to the DEAD box helicase family. DeaD/CsdA subfamily.

The protein resides in the cytoplasm. It carries out the reaction ATP + H2O = ADP + phosphate + H(+). Its function is as follows. DEAD-box RNA helicase involved in various cellular processes at low temperature, including ribosome biogenesis, mRNA degradation and translation initiation. This chain is ATP-dependent RNA helicase DeaD, found in Mycobacterium tuberculosis (strain CDC 1551 / Oshkosh).